The sequence spans 167 residues: Ribosome-binding factor A (167 aa).

The interval 122–167 is disordered; the sequence is LAASAKHAGEADPYKGDSPEDIDEDDFDEEDTDLSGDNDLDEDANR. Basic and acidic residues predominate over residues 128–139; sequence HAGEADPYKGDS. Residues 140-167 are compositionally biased toward acidic residues; it reads PEDIDEDDFDEEDTDLSGDNDLDEDANR.

Belongs to the RbfA family. In terms of assembly, monomer. Binds 30S ribosomal subunits, but not 50S ribosomal subunits or 70S ribosomes.

It is found in the cytoplasm. Functionally, one of several proteins that assist in the late maturation steps of the functional core of the 30S ribosomal subunit. Associates with free 30S ribosomal subunits (but not with 30S subunits that are part of 70S ribosomes or polysomes). Required for efficient processing of 16S rRNA. May interact with the 5'-terminal helix region of 16S rRNA. In Paenarthrobacter aurescens (strain TC1), this protein is Ribosome-binding factor A.